Here is a 916-residue protein sequence, read N- to C-terminus: DNA repair endonuclease XPF (916 aa).

The helicase-like stretch occupies residues 1 to 457 (MESGQPARRI…EVWMKFRKED (457 aa)). Leucine-zipper stretches follow at residues 233-254 (LNAC…DLSL) and 270-298 (LDPL…LQYL). At lysine 289 the chain carries N6-acetyllysine. The segment at 460–487 (KRIRKSHKRPKDPQNKERASTKERTLKK) is disordered. Positions 470–483 (KDPQNKERASTKER) are enriched in basic and acidic residues. A Nuclear localization signal motif is present at residues 486–491 (KKKKRK). Lysine 500 participates in a covalent cross-link: Glycyl lysine isopeptide (Lys-Gly) (interchain with G-Cter in SUMO2). Disordered regions lie at residues 502-526 (EELE…ESCP) and 660-679 (TASA…EQNG). Position 521 is a phosphoserine (serine 521). Positions 658–813 (RGTASADVST…PSPHATAELF (156 aa)) are nuclease. The ERCC4 domain maps to 683 to 763 (SIVVDMREFR…RPVLLIEFDP (81 aa)). Serine 764 carries the phosphoserine modification. The hhH2, dimerization with ERCC1 stretch occupies residues 837–905 (TLPESEKYNP…QLYDFIHTSF (69 aa)). Lysine 911 is subject to N6-acetyllysine.

The protein belongs to the XPF family. In terms of assembly, heterodimer composed of ERCC1 and ERCC4/XPF. Interacts with SLX4/BTBD12; this interaction is direct and links the ERCC1-ERCC4/XPF complex to SLX4, which may coordinate the action of the structure-specific endonuclease during DNA repair. It depends on Mg(2+) as a cofactor. In terms of processing, acetylation at Lys-911 by KAT5 promotes interaction with ERCC1 by disrupting a salt bridge between Glu-907 and Lys-911, thereby exposing a second binding site for ERCC1. Deacetylated by SIRT1.

The protein resides in the nucleus. It localises to the chromosome. Functionally, catalytic component of a structure-specific DNA repair endonuclease responsible for the 5-prime incision during DNA repair, and which is essential for nucleotide excision repair (NER) and interstrand cross-link (ICL) repair. This chain is DNA repair endonuclease XPF, found in Homo sapiens (Human).